The sequence spans 429 residues: Adenylosuccinate synthetase (429 aa).

Residues 12–18 (GDEGKGK) and 40–42 (GHT) contribute to the GTP site. The Proton acceptor role is filled by D13. The Mg(2+) site is built by D13 and G40. IMP is bound by residues 13 to 16 (DEGK), 38 to 41 (NAGH), T128, R142, Q223, T238, and R302. H41 (proton donor) is an active-site residue. Residue 298–304 (TTTGRPR) coordinates substrate. GTP is bound by residues R304, 330–332 (SID), and 412–414 (SVG).

Belongs to the adenylosuccinate synthetase family. Homodimer. The cofactor is Mg(2+).

Its subcellular location is the cytoplasm. The enzyme catalyses IMP + L-aspartate + GTP = N(6)-(1,2-dicarboxyethyl)-AMP + GDP + phosphate + 2 H(+). It functions in the pathway purine metabolism; AMP biosynthesis via de novo pathway; AMP from IMP: step 1/2. Plays an important role in the de novo pathway of purine nucleotide biosynthesis. Catalyzes the first committed step in the biosynthesis of AMP from IMP. In Exiguobacterium sp. (strain ATCC BAA-1283 / AT1b), this protein is Adenylosuccinate synthetase.